A 247-amino-acid chain; its full sequence is MDVLSCSNNTLKGLYDISGVEVGQHFYWQIGGFQVHGQVLITSWVVIAILLGSASIAVRNPQTIPNDSQNFFEYILEFIRDVSKTQIGEEYGPWVPFIGTMFLFIFVSNWSGALLPWKLVELPHGELAAPTNDINTTVALALLTSVAYFYAGLSKKGLGYFSKYIQPTPILLPINILEDFTKPLSLSFRLFGNILADELVVVVLVSLVPSVVPIPVMFLGLFTSGIQALIFATLAAAYIGESMEGHH.

The next 5 membrane-spanning stretches (helical) occupy residues 38-58 (QVLI…SIAV), 95-115 (VPFI…GALL), 134-154 (INTT…AGLS), 199-219 (LVVV…VMFL), and 220-240 (GLFT…AYIG).

It belongs to the ATPase A chain family. F-type ATPases have 2 components, CF(1) - the catalytic core - and CF(0) - the membrane proton channel. CF(1) has five subunits: alpha(3), beta(3), gamma(1), delta(1), epsilon(1). CF(0) has four main subunits: a, b, b' and c.

It localises to the plastid. The protein localises to the chloroplast thylakoid membrane. Functionally, key component of the proton channel; it plays a direct role in the translocation of protons across the membrane. The protein is ATP synthase subunit a, chloroplastic of Oenothera argillicola (Appalachian evening primrose).